We begin with the raw amino-acid sequence, 92 residues long: Small ribosomal subunit protein uS19 (92 aa).

This sequence belongs to the universal ribosomal protein uS19 family.

Functionally, protein S19 forms a complex with S13 that binds strongly to the 16S ribosomal RNA. In Gloeothece citriformis (strain PCC 7424) (Cyanothece sp. (strain PCC 7424)), this protein is Small ribosomal subunit protein uS19.